We begin with the raw amino-acid sequence, 219 residues long: 2-C-methyl-D-erythritol 4-phosphate cytidylyltransferase (219 aa).

This sequence belongs to the IspD/TarI cytidylyltransferase family. IspD subfamily.

It carries out the reaction 2-C-methyl-D-erythritol 4-phosphate + CTP + H(+) = 4-CDP-2-C-methyl-D-erythritol + diphosphate. It participates in isoprenoid biosynthesis; isopentenyl diphosphate biosynthesis via DXP pathway; isopentenyl diphosphate from 1-deoxy-D-xylulose 5-phosphate: step 2/6. In terms of biological role, catalyzes the formation of 4-diphosphocytidyl-2-C-methyl-D-erythritol from CTP and 2-C-methyl-D-erythritol 4-phosphate (MEP). In Bacteroides fragilis (strain ATCC 25285 / DSM 2151 / CCUG 4856 / JCM 11019 / LMG 10263 / NCTC 9343 / Onslow / VPI 2553 / EN-2), this protein is 2-C-methyl-D-erythritol 4-phosphate cytidylyltransferase.